The chain runs to 350 residues: METSCFTLLGLLVSLSFFLTLSAQMTGNFNCSGSTSTCQSLVGYSSKNATTLRNIQTLFAVKNLRSILGANNLPLNTSRDQRVNPNQVVRVPIHCSCSNGTGVSNRDIEYTIKKDDILSFVATEIFGGLVTYEKISEVNKIPDPNKIEIGQKFWIPLPCSCDKLNGEDVVHYAHVVKLGSSLGEIAAQFGTDNTTLAQLNGIIGDSQLLADKPLDVPLKACSSSVRKDSLDAPLLLSNNSYVFTANNCVKCTCDALKNWTLSCQSSSEIKPSNWQTCPPFSQCDGALLNASCRQPRDCVYAGYSNQTIFTTASPACPDSAGPDNYASTLSSSFNFVIVLIQCALLCLCLL.

Residues 1 to 23 (METSCFTLLGLLVSLSFFLTLSA) form the signal peptide. Residues asparagine 30, asparagine 48, asparagine 76, and asparagine 99 are each glycosylated (N-linked (GlcNAc...) asparagine). Intrachain disulfides connect cysteine 31–cysteine 97, cysteine 38–cysteine 161, cysteine 95–cysteine 159, and cysteine 97–cysteine 161. LysM domains lie at 108 to 155 (IEYT…KFWI) and 172 to 216 (YAHV…PLDV). Chitin contacts are provided by residues 114-120 (KDDILSF) and 142-149 (PDPNKIEI). Residues asparagine 193, asparagine 238, asparagine 258, asparagine 289, and asparagine 305 are each glycosylated (N-linked (GlcNAc...) asparagine). Disulfide bonds link cysteine 221/cysteine 253 and cysteine 248/cysteine 277. The GPI-anchor amidated aspartate moiety is linked to residue aspartate 318. Positions 319–350 (SAGPDNYASTLSSSFNFVIVLIQCALLCLCLL) are cleaved as a propeptide — removed in mature form.

Forms homooligomers. Interacts with CERK1. Binds to chitin oligosaccharide elicitor.

Its subcellular location is the cell membrane. Chitin elicitor-binding protein involved in the perception of chitin oligosaccharide elicitor. The polypeptide is LysM domain-containing GPI-anchored protein 2 (LYM2) (Arabidopsis thaliana (Mouse-ear cress)).